The following is a 257-amino-acid chain: Alcohol dehydrogenase 1 (257 aa).

Position 9 to 33 (9 to 33) interacts with NAD(+); it reads VFVGGLGFIAYEACKYLMNNDLASL. Residue Ser-137 participates in substrate binding. Tyr-150 functions as the Proton acceptor in the catalytic mechanism.

It belongs to the short-chain dehydrogenases/reductases (SDR) family. In terms of assembly, homodimer.

It catalyses the reaction a primary alcohol + NAD(+) = an aldehyde + NADH + H(+). It carries out the reaction a secondary alcohol + NAD(+) = a ketone + NADH + H(+). The sequence is that of Alcohol dehydrogenase 1 (ADH1) from Ceratitis capitata (Mediterranean fruit fly).